Here is a 339-residue protein sequence, read N- to C-terminus: Anthranilate phosphoribosyltransferase (339 aa).

5-phospho-alpha-D-ribose 1-diphosphate-binding positions include G79, 82–83 (GD), S87, 89–92 (NIST), 107–115 (KHGNRSISS), and S119. Residue G79 coordinates anthranilate. Residue S91 coordinates Mg(2+). Residue N110 participates in anthranilate binding. R165 is a binding site for anthranilate. Mg(2+)-binding residues include D224 and E225.

Belongs to the anthranilate phosphoribosyltransferase family. Homodimer. It depends on Mg(2+) as a cofactor.

The catalysed reaction is N-(5-phospho-beta-D-ribosyl)anthranilate + diphosphate = 5-phospho-alpha-D-ribose 1-diphosphate + anthranilate. Its pathway is amino-acid biosynthesis; L-tryptophan biosynthesis; L-tryptophan from chorismate: step 2/5. Functionally, catalyzes the transfer of the phosphoribosyl group of 5-phosphorylribose-1-pyrophosphate (PRPP) to anthranilate to yield N-(5'-phosphoribosyl)-anthranilate (PRA). The polypeptide is Anthranilate phosphoribosyltransferase (Listeria monocytogenes serotype 4b (strain CLIP80459)).